The following is a 541-amino-acid chain: Capsid protein VP1 (541 aa).

The interval 1 to 224 (MRMSDGAAPK…FVYLTPPIER (224 aa)) is shell domain. The segment at 225-277 (TIYRMVDLPVIQPRLCTHARWPAPVYGLLVDPSLPSNPQWQNGRVHVDGTLLG) is P1 sub-domain 1. The segment at 225 to 541 (TIYRMVDLPV…SLATGRMLKQ (317 aa)) is protruding domain. The tract at residues 278-416 (TTPISGSWVS…EYNDGLLVPL (139 aa)) is P2 sub-domain. Residues 298–366 (QSGTGEVATF…MILGPTTNAD (69 aa)) form an interaction with host receptor CD300LF region. The interval 417–541 (APPIGPFLPG…SLATGRMLKQ (125 aa)) is P1 sub-domain 2.

The protein belongs to the caliciviridae capsid protein family. As to quaternary structure, homodimer. Homomultimer. Interacts with the minor capsid protein VP2. Interacts (via P2 subdomain) with host receptor CD300LF (via N-terminus); this interaction requires Mg(2+) and Ca(2+), and allows viral binding and entry into the host cell. Stochioimetry is 2:2. Bile acids interact with the P domain dimer interface and act as cofactors enhancing virus binding and infectivity. Interacts with host receptor CD300LD; this interaction allows viral binding and entry into the host cell.

Its subcellular location is the virion. It localises to the host cytoplasm. Its function is as follows. Capsid protein self assembles to form an icosahedral capsid with a T=3 symmetry, about 38 nm in diameter, and consisting of 180 capsid proteins. A smaller form of capsid with a diameter of 23 nm might be capsid proteins assembled as icosahedron with T=1 symmetry. The capsid encapsulates the genomic RNA and is decorated with VP2 proteins. Mediates virion attachment to the host cell receptor CD300LF. This chain is Capsid protein VP1, found in Norovirus (isolate Mouse/NoV/United States/MNV1/2002/GV) (MNV-1).